Reading from the N-terminus, the 837-residue chain is Espin (837 aa).

ANK repeat units follow at residues 1–31, 35–66, 69–99, 103–132, 137–167, 171–201, 205–235, 238–267, and 270–299; these read MALE…GPSL, LDAL…AVSR, NGAT…RVQE, SGAT…ANSA, TGAL…GVNA, NGAT…DPHL, DGMT…SFEQ, DGAT…EISQ, and WGGT…GLDV. Phosphoserine occurs at positions 337 and 341. Over residues 339–348 the composition is skewed to basic and acidic residues; it reads DPSMDLEAKQ. 4 disordered regions span residues 339–459, 477–712, 745–767, and 785–816; these read DPSM…VGLH, DSLK…PATL, KLQQ…EARL, and EREQ…TLGY. The span at 351–364 shows a compositional bias: polar residues; sequence SGMSSPNTTMSVQP. Low complexity predominate over residues 376–395; it reads LSNYDSCSSSHSSSKGQRST. A phosphoserine mark is found at serine 400 and serine 401. The segment covering 423–455 has biased composition (pro residues); the sequence is SLPPPPPPSFPPPPPPGTQLPPPPPGYPAPNPP. Serine 497, serine 504, and serine 531 each carry phosphoserine. Over residues 581-604 the composition is skewed to pro residues; sequence LPPPPPPPPLPEALSSPPPAPPLP. The span at 617 to 626 shows a compositional bias: low complexity; sequence SSSSTGSTKS. Composition is skewed to polar residues over residues 627–636 and 651–662; these read FNMMSPTGDN and PTPQSKGLTTVF. At serine 631 the chain carries Phosphoserine. In terms of domain architecture, WH2 spans 635–652; sequence DNSELLAEIKAGKSLKPT. Residues 663–673 show a composition bias toward low complexity; that stretch reads SGSGQPASQPE. Phosphoserine occurs at positions 670, 674, and 680. Residues 738–814 are a coiled coil; sequence KRQVMVRKLQ…KEQSEKLRTL (77 aa).

Monomer. Interacts with PFN2. Binds F-actin in a Ca(2+)-resistant fashion. Interacts (via N-terminal) with BAIAP2 (via SH3-domain). Interacts with MYO3A (via C-terminus). Interacts with MYO3B (via C-terminus). As to expression, expressed at high concentration in the microvillar parallel actin bundle (PAB) of hair cells stereocilia in the cochlea and vestibular system. Detected also at high levels of a number of other sensory cell types, including taste receptor cells, solitary chemoreceptor cells, vomeronasal sensory neurons and Merkel cells. Isoform 1 is detected in testis. Isoforms 2 is detected in small intestine and kidney (at protein level). Isoforms 3, 4, 6 and 8 are expressed in Purkinje cells dendritic spines.

The protein localises to the cytoplasm. The protein resides in the cytoskeleton. It localises to the cell projection. Its subcellular location is the stereocilium. It is found in the microvillus. The protein localises to the cell junction. The protein resides in the dendritic spine. Functionally, multifunctional actin-bundling protein. Plays a major role in regulating the organization, dimension, dynamics and signaling capacities of the actin filament-rich microvilli in the mechanosensory and chemosensory cells. Required for the assembly and stabilization of the stereociliary parallel actin bundles. Plays a crucial role in the formation and maintenance of inner ear hair cell stereocilia. Involved in the elongation of actin in stereocilia. In extrastriolar hair cells, required for targeting MYO3B to stereocilia tips, and for regulation of stereocilia diameter and staircase formation. In Rattus norvegicus (Rat), this protein is Espin (Espn).